Reading from the N-terminus, the 648-residue chain is DNA mismatch repair protein MutL (648 aa).

A disordered region spans residues 336-443 (ERPFEPSSPQ…SGSAGESRAR (108 aa)). Over residues 370–381 (SPESKTHSTWNE) the composition is skewed to polar residues. Basic and acidic residues predominate over residues 383 to 410 (SRVDTSRAETSRESRIDSPLGERTRDIA).

Belongs to the DNA mismatch repair MutL/HexB family.

Its function is as follows. This protein is involved in the repair of mismatches in DNA. It is required for dam-dependent methyl-directed DNA mismatch repair. May act as a 'molecular matchmaker', a protein that promotes the formation of a stable complex between two or more DNA-binding proteins in an ATP-dependent manner without itself being part of a final effector complex. In Shewanella sp. (strain ANA-3), this protein is DNA mismatch repair protein MutL.